A 344-amino-acid chain; its full sequence is Exopolyphosphatase 1 (344 aa).

The interval 319–344 (VHTSVRAVGGQPADRNAANRSRGSKP) is disordered.

Belongs to the GppA/Ppx family. Homodimer.

The catalysed reaction is [phosphate](n) + H2O = [phosphate](n-1) + phosphate + H(+). Its function is as follows. Degradation of inorganic polyphosphates (polyP). Releases orthophosphate processively from the ends of the polyP chain. This is Exopolyphosphatase 1 from Mycobacterium bovis (strain ATCC BAA-935 / AF2122/97).